A 335-amino-acid polypeptide reads, in one-letter code: Cell division protein ZipA (335 aa).

At 1–4 (MDLN) the chain is on the periplasmic side. The helical transmembrane segment at 5–25 (AILIILGVIALIILVAHGIWS) threads the bilayer. Residues 26–335 (NRCEKSQYFE…AERDYLARVS (310 aa)) are Cytoplasmic-facing.

Belongs to the ZipA family. Interacts with FtsZ via their C-terminal domains.

The protein resides in the cell inner membrane. Its function is as follows. Essential cell division protein that stabilizes the FtsZ protofilaments by cross-linking them and that serves as a cytoplasmic membrane anchor for the Z ring. Also required for the recruitment to the septal ring of downstream cell division proteins. This Histophilus somni (strain 129Pt) (Haemophilus somnus) protein is Cell division protein ZipA.